Reading from the N-terminus, the 209-residue chain is MRAAAISMPRLNKMPGMFFSASPKDSKEPSHSLLDDNKQKKRPKTFGMDMKAYLRSMIPHLESGMKSSKSKDILSAEEVMQWSQSLEKLLANQMGQNVFGKFLKSEFSEENIEFWLACEDYKKTETDLLHNKAEHIYKAFVHSDAVKQINIDFHTRESTAKKIKTPTPTCFDEAQKVIYALMEKDSYPRFLKSNIYLNLLNDLQANTLK.

The segment at 18–42 (FFSASPKDSKEPSHSLLDDNKQKKR) is disordered. Over residues 24-38 (KDSKEPSHSLLDDNK) the composition is skewed to basic and acidic residues. An RGS domain is found at 85–200 (SLEKLLANQM…LKSNIYLNLL (116 aa)).

In terms of assembly, interacts with GNAI1 and GNAQ. In terms of tissue distribution, expressed in multiple tissues.

The protein resides in the cell membrane. Its subcellular location is the cytoplasm. The protein localises to the cytosol. Its function is as follows. Regulates G protein-coupled receptor signaling cascades, including signaling downstream of the N-formylpeptide chemoattractant receptors and leukotriene receptors. Inhibits B cell chemotaxis toward CXCL12. Inhibits signal transduction by increasing the GTPase activity of G protein alpha subunits, thereby driving them into their inactive GDP-bound form. In Rattus norvegicus (Rat), this protein is Regulator of G-protein signaling 1 (Rgs1).